The sequence spans 562 residues: Ycf55-like protein (562 aa).

The region spanning 7-125 is the Response regulatory domain; that stretch reads TIVIVDEDPV…DLVTGLKQVH (119 aa).

Belongs to the ycf55 family.

The protein is Ycf55-like protein of Synechocystis sp. (strain ATCC 27184 / PCC 6803 / Kazusa).